Here is a 100-residue protein sequence, read N- to C-terminus: uncharacterized protein (100 aa).

2 helical membrane passes run 1–21 (MLVL…YKVK) and 54–74 (MILF…VIGA).

Its subcellular location is the cell membrane. This is an uncharacterized protein from Bacillus subtilis (strain 168).